Reading from the N-terminus, the 528-residue chain is Alpha-amylase (528 aa).

Positions 1–28 are cleaved as a signal peptide; the sequence is MNKKWLNIPALIALLAAIAFGSVAPAEA. The Ca(2+) site is built by Asn168 and Asp228. Asp258 (nucleophile) is an active-site residue. His262 is a binding site for Ca(2+). Glu286 serves as the catalytic Proton donor.

This sequence belongs to the glycosyl hydrolase 13 family. Monomer. The cofactor is Ca(2+).

The catalysed reaction is Endohydrolysis of (1-&gt;4)-alpha-D-glucosidic linkages in polysaccharides containing three or more (1-&gt;4)-alpha-linked D-glucose units.. The protein is Alpha-amylase of Niallia circulans (Bacillus circulans).